We begin with the raw amino-acid sequence, 174 residues long: Inactive signal peptidase IA (174 aa).

Topologically, residues 1 to 7 (MKKVVKY) are cytoplasmic. A helical membrane pass occupies residues 8 to 28 (LISLILAIIIVLFVQTFVIVG). Over 29–174 (HVIPNNDMSP…FSKWTIQFKS (146 aa)) the chain is Extracellular.

The protein belongs to the peptidase S26 family.

Its subcellular location is the cell membrane. Catalytically inactive. In Staphylococcus aureus (strain MRSA252), this protein is Inactive signal peptidase IA (spsA).